Reading from the N-terminus, the 197-residue chain is Imidazoleglycerol-phosphate dehydratase (197 aa).

The protein belongs to the imidazoleglycerol-phosphate dehydratase family.

It localises to the cytoplasm. The catalysed reaction is D-erythro-1-(imidazol-4-yl)glycerol 3-phosphate = 3-(imidazol-4-yl)-2-oxopropyl phosphate + H2O. The protein operates within amino-acid biosynthesis; L-histidine biosynthesis; L-histidine from 5-phospho-alpha-D-ribose 1-diphosphate: step 6/9. The chain is Imidazoleglycerol-phosphate dehydratase from Chromobacterium violaceum (strain ATCC 12472 / DSM 30191 / JCM 1249 / CCUG 213 / NBRC 12614 / NCIMB 9131 / NCTC 9757 / MK).